The chain runs to 457 residues: MALWGGRFTQAADKRFKDFNDSLRFDYRLAEQDIEGSIGWSKALVSVGVLTVQEQQQLESALNTLLIEVRSNPQAILQDDAEDIHSWVESKLIDKVGNLGKKLHTGRSRNDQVALDIKMWCKQRVIELQSSLHALQCKLVETAENNQHAVMPGYTHLQRAQPITFAHWCMAYVEMLDRDYSRLTDAYQRMNSCPLGSGALAGTAYAIDREQLALDLGFDVATRNSLDSVSDRDHIVELLSTASLSMAHLSRFAEDMIIFNSGESNFVELSDRVTSGSSLMPQKKNPDACELIRGKAGRVMGALTGMLMTLKGLPLAYNKDMQEDKEGIFDALDTWQDCIDMAALVLDGIQVNVERTKEAALKGYSNATELADYLVAKGVPFRDSHHIVGETVVYAIQQHKALEALSVAEFKQFSDVVEEDVYQILSLQSCLDKRCAKGGVSPLRVAEAIAEAKARLS.

It belongs to the lyase 1 family. Argininosuccinate lyase subfamily.

It localises to the cytoplasm. The catalysed reaction is 2-(N(omega)-L-arginino)succinate = fumarate + L-arginine. It participates in amino-acid biosynthesis; L-arginine biosynthesis; L-arginine from L-ornithine and carbamoyl phosphate: step 3/3. The sequence is that of Argininosuccinate lyase from Pasteurella multocida (strain Pm70).